A 264-amino-acid chain; its full sequence is DNA repair protein RecO (264 aa).

This sequence belongs to the RecO family.

Involved in DNA repair and RecF pathway recombination. The polypeptide is DNA repair protein RecO (Leuconostoc citreum (strain KM20)).